Reading from the N-terminus, the 262-residue chain is 3-methyl-2-oxobutanoate hydroxymethyltransferase (262 aa).

Asp44 and Asp83 together coordinate Mg(2+). Residues 44 to 45, Asp83, and Lys111 each bind 3-methyl-2-oxobutanoate; that span reads DS. Position 113 (Glu113) interacts with Mg(2+). Residue Glu180 is the Proton acceptor of the active site.

Belongs to the PanB family. As to quaternary structure, homodecamer; pentamer of dimers. Mg(2+) is required as a cofactor.

It is found in the cytoplasm. The enzyme catalyses 3-methyl-2-oxobutanoate + (6R)-5,10-methylene-5,6,7,8-tetrahydrofolate + H2O = 2-dehydropantoate + (6S)-5,6,7,8-tetrahydrofolate. It functions in the pathway cofactor biosynthesis; (R)-pantothenate biosynthesis; (R)-pantoate from 3-methyl-2-oxobutanoate: step 1/2. Functionally, catalyzes the reversible reaction in which hydroxymethyl group from 5,10-methylenetetrahydrofolate is transferred onto alpha-ketoisovalerate to form ketopantoate. This Alcanivorax borkumensis (strain ATCC 700651 / DSM 11573 / NCIMB 13689 / SK2) protein is 3-methyl-2-oxobutanoate hydroxymethyltransferase.